Consider the following 330-residue polypeptide: Ketol-acid reductoisomerase (NADP(+)) (330 aa).

One can recognise a KARI N-terminal Rossmann domain in the interval 1–181 (MKVFYDSDFK…GLSRAGVIQT (181 aa)). NADP(+) contacts are provided by residues 24-27 (YGSQ), Arg47, Ser52, and 82-85 (DELQ). Residue His107 is part of the active site. Gly133 is a binding site for NADP(+). The region spanning 182–327 (TFKEETETDL…AKLRKMCGLE (146 aa)) is the KARI C-terminal knotted domain. Positions 190, 194, 226, and 230 each coordinate Mg(2+). A substrate-binding site is contributed by Ser251.

This sequence belongs to the ketol-acid reductoisomerase family. Requires Mg(2+) as cofactor.

It catalyses the reaction (2R)-2,3-dihydroxy-3-methylbutanoate + NADP(+) = (2S)-2-acetolactate + NADPH + H(+). The enzyme catalyses (2R,3R)-2,3-dihydroxy-3-methylpentanoate + NADP(+) = (S)-2-ethyl-2-hydroxy-3-oxobutanoate + NADPH + H(+). It participates in amino-acid biosynthesis; L-isoleucine biosynthesis; L-isoleucine from 2-oxobutanoate: step 2/4. It functions in the pathway amino-acid biosynthesis; L-valine biosynthesis; L-valine from pyruvate: step 2/4. Its function is as follows. Involved in the biosynthesis of branched-chain amino acids (BCAA). Catalyzes an alkyl-migration followed by a ketol-acid reduction of (S)-2-acetolactate (S2AL) to yield (R)-2,3-dihydroxy-isovalerate. In the isomerase reaction, S2AL is rearranged via a Mg-dependent methyl migration to produce 3-hydroxy-3-methyl-2-ketobutyrate (HMKB). In the reductase reaction, this 2-ketoacid undergoes a metal-dependent reduction by NADPH to yield (R)-2,3-dihydroxy-isovalerate. The chain is Ketol-acid reductoisomerase (NADP(+)) from Methanococcus maripaludis (strain C5 / ATCC BAA-1333).